The chain runs to 420 residues: uncharacterized protein (420 aa).

2 disordered regions span residues arginine 84–glutamate 103 and serine 122–serine 211. Over residues serine 85–glutamate 103 the composition is skewed to polar residues. Over residues serine 184–lysine 199 the composition is skewed to basic and acidic residues. 2 coiled-coil regions span residues threonine 265–asparagine 310 and leucine 345–glutamate 374. Residues lysine 399–alanine 408 show a composition bias toward polar residues. A disordered region spans residues lysine 399–asparagine 420. A compositionally biased stretch (basic residues) spans serine 410–asparagine 420.

This is an uncharacterized protein from Caenorhabditis elegans.